A 100-amino-acid chain; its full sequence is Large ribosomal subunit protein uL23 (100 aa).

Belongs to the universal ribosomal protein uL23 family. As to quaternary structure, part of the 50S ribosomal subunit. Contacts protein L29, and trigger factor when it is bound to the ribosome.

In terms of biological role, one of the early assembly proteins it binds 23S rRNA. One of the proteins that surrounds the polypeptide exit tunnel on the outside of the ribosome. Forms the main docking site for trigger factor binding to the ribosome. The sequence is that of Large ribosomal subunit protein uL23 from Xylella fastidiosa (strain M23).